A 182-amino-acid chain; its full sequence is ATP-dependent protease subunit HslV (182 aa).

Threonine 12 is an active-site residue. Na(+) is bound by residues alanine 167, cysteine 170, and threonine 173.

It belongs to the peptidase T1B family. HslV subfamily. In terms of assembly, a double ring-shaped homohexamer of HslV is capped on each side by a ring-shaped HslU homohexamer. The assembly of the HslU/HslV complex is dependent on binding of ATP.

The protein resides in the cytoplasm. It carries out the reaction ATP-dependent cleavage of peptide bonds with broad specificity.. Its activity is regulated as follows. Allosterically activated by HslU binding. Its function is as follows. Protease subunit of a proteasome-like degradation complex believed to be a general protein degrading machinery. The polypeptide is ATP-dependent protease subunit HslV (Chlorobium phaeobacteroides (strain DSM 266 / SMG 266 / 2430)).